Here is a 401-residue protein sequence, read N- to C-terminus: Pectate lyase (401 aa).

A signal peptide spans 1–20 (MATTILPLILFISSLAIASS). N38 is a glycosylation site (N-linked (GlcNAc...) asparagine). Ca(2+) contacts are provided by D199, D223, and D227. The active site involves R279.

This sequence belongs to the polysaccharide lyase 1 family. Ca(2+) serves as cofactor. Expressed in sites of vascular differentiation and in new primordia on the flank of the shoot meristem.

The catalysed reaction is Eliminative cleavage of (1-&gt;4)-alpha-D-galacturonan to give oligosaccharides with 4-deoxy-alpha-D-galact-4-enuronosyl groups at their non-reducing ends.. It functions in the pathway glycan metabolism; pectin degradation; 2-dehydro-3-deoxy-D-gluconate from pectin: step 2/5. Involved in the degradation of pectin. May assist in the removal and modification of an existing pectin matrix in order to allow the deposition of newly synthesized walls polymers for a specialized function or to create an architecture that is extensible. The protein is Pectate lyase of Zinnia elegans (Garden zinnia).